Reading from the N-terminus, the 345-residue chain is Holliday junction branch migration complex subunit RuvB (345 aa).

The tract at residues 1-186 (MSTDPDEREV…FGFTAHMDFY (186 aa)) is large ATPase domain (RuvB-L). ATP is bound by residues leucine 25, arginine 26, glycine 67, lysine 70, threonine 71, serine 72, 133-135 (EDF), arginine 176, tyrosine 186, and arginine 223. A Mg(2+)-binding site is contributed by threonine 71. A small ATPAse domain (RuvB-S) region spans residues 187–257 (EPAELERVLV…VAKAALAVYD (71 aa)). The tract at residues 260 to 345 (ELGLDRLDRA…AGANQPGLFE (86 aa)) is head domain (RuvB-H). The DNA site is built by arginine 315 and arginine 320.

Belongs to the RuvB family. In terms of assembly, homohexamer. Forms an RuvA(8)-RuvB(12)-Holliday junction (HJ) complex. HJ DNA is sandwiched between 2 RuvA tetramers; dsDNA enters through RuvA and exits via RuvB. An RuvB hexamer assembles on each DNA strand where it exits the tetramer. Each RuvB hexamer is contacted by two RuvA subunits (via domain III) on 2 adjacent RuvB subunits; this complex drives branch migration. In the full resolvosome a probable DNA-RuvA(4)-RuvB(12)-RuvC(2) complex forms which resolves the HJ.

Its subcellular location is the cytoplasm. The enzyme catalyses ATP + H2O = ADP + phosphate + H(+). Its function is as follows. The RuvA-RuvB-RuvC complex processes Holliday junction (HJ) DNA during genetic recombination and DNA repair, while the RuvA-RuvB complex plays an important role in the rescue of blocked DNA replication forks via replication fork reversal (RFR). RuvA specifically binds to HJ cruciform DNA, conferring on it an open structure. The RuvB hexamer acts as an ATP-dependent pump, pulling dsDNA into and through the RuvAB complex. RuvB forms 2 homohexamers on either side of HJ DNA bound by 1 or 2 RuvA tetramers; 4 subunits per hexamer contact DNA at a time. Coordinated motions by a converter formed by DNA-disengaged RuvB subunits stimulates ATP hydrolysis and nucleotide exchange. Immobilization of the converter enables RuvB to convert the ATP-contained energy into a lever motion, pulling 2 nucleotides of DNA out of the RuvA tetramer per ATP hydrolyzed, thus driving DNA branch migration. The RuvB motors rotate together with the DNA substrate, which together with the progressing nucleotide cycle form the mechanistic basis for DNA recombination by continuous HJ branch migration. Branch migration allows RuvC to scan DNA until it finds its consensus sequence, where it cleaves and resolves cruciform DNA. This chain is Holliday junction branch migration complex subunit RuvB, found in Mycobacterium ulcerans (strain Agy99).